The primary structure comprises 228 residues: Ribonuclease 3 1 (228 aa).

Positions 1–124 (MYKLLMFRDD…VIGAYYLDNN (124 aa)) constitute an RNase III domain. Glutamate 37 lines the Mg(2+) pocket. The active site involves aspartate 41. Serine 110 and glutamate 113 together coordinate Mg(2+). Glutamate 113 is a catalytic residue. The DRBM domain maps to 153-223 (DSKNRFQEWV…AENALANLNK (71 aa)).

This sequence belongs to the ribonuclease III family. As to quaternary structure, homodimer. Mg(2+) is required as a cofactor.

It localises to the cytoplasm. The catalysed reaction is Endonucleolytic cleavage to 5'-phosphomonoester.. In terms of biological role, digests double-stranded RNA. Involved in the processing of primary rRNA transcript to yield the immediate precursors to the large and small rRNAs (23S and 16S). Processes some mRNAs, and tRNAs when they are encoded in the rRNA operon. Processes pre-crRNA and tracrRNA of type II CRISPR loci if present in the organism. In Nostoc sp. (strain PCC 7120 / SAG 25.82 / UTEX 2576), this protein is Ribonuclease 3 1.